The primary structure comprises 345 residues: D-apiose dehydrogenase (345 aa).

15–16 (FF) lines the NAD(+) pocket. Mg(2+) contacts are provided by tryptophan 24, lysine 25, valine 27, and alanine 30. NAD(+) contacts are provided by residues aspartate 37, serine 79, 97-98 (QK), asparagine 126, and 165-167 (QPY). Lysine 98 lines the substrate pocket. Substrate-binding residues include glutamine 165, aspartate 178, histidine 182, and tyrosine 232.

The protein belongs to the Gfo/Idh/MocA family.

The enzyme catalyses D-apiofuranose + NAD(+) = D-apionolactone + NADH + H(+). The protein operates within carbohydrate metabolism. In terms of biological role, involved in catabolism of D-apiose. Catalyzes oxidation of D-apiose to D-apionolactone. In Rhizobium rhizogenes (strain K84 / ATCC BAA-868) (Agrobacterium radiobacter), this protein is D-apiose dehydrogenase.